Here is a 2301-residue protein sequence, read N- to C-terminus: Genome polyprotein (2301 aa).

A zinc finger spans residues C3–C14. The tract at residues D30–D46 is acidic. Residues M60–M73 are theilo. G77 carries the N-myristoyl glycine; by host lipid modification. An intrachain disulfide couples C501 to C503. The tract at residues Y1039–I1045 is host EIF4E binding. One can recognise an SF3 helicase domain in the interval I1281 to I1446. G1310–S1317 contributes to the ATP binding site. Y1606 is modified (O-(5'-phospho-RNA)-tyrosine). Residues N1634–I1827 form the Peptidase C3 domain. Residues H1678, D1712, and C1791 each act as for protease 3C activity in the active site. The RdRp catalytic domain occupies N2069–L2187. Active-site for RdRp activity residues include D2075 and D2173.

It belongs to the picornaviruses polyprotein family. Interacts with host EIF4E. Interacts with the leader protein. As to quaternary structure, interacts with host RAN; the complex L-RAN recruits cellular kinases responsible for the L-induced nucleocytoplasmic trafficking inhibition. The complex L-RAN can further bind to the host exportins XPO1/CRM1 and CSE1L/CAS. Interacts with the protein 2A. Interacts with host RNASEL; this interaction prevents RNASEL activation by its substrate 2'-5' oligoadenylates. Post-translationally, phosphorylated. Specific enzymatic cleavages by the viral protease in vivo yield a variety of precursors and mature proteins. The polyprotein seems to be cotranslationally cleaved at the 2A/2B junction by a ribosomal skip from one codon to the next without formation of a peptide bond. This process would release the P1-2A peptide from the translational complex. In terms of processing, during virion maturation, immature virions are rendered infectious following cleavage of VP0 into VP4 and VP2. This maturation seems to be an autocatalytic event triggered by the presence of RNA in the capsid and is followed by a conformational change of the particle. Post-translationally, uridylylated by the polymerase and is covalently linked to the 5'-end of genomic RNA. This uridylylated form acts as a nucleotide-peptide primer for the polymerase. Myristoylation is required during RNA encapsidation and formation of the mature virus particle.

Its subcellular location is the virion. The protein localises to the host cytoplasm. The protein resides in the host nucleus. It localises to the host nucleolus. It is found in the host cytoplasmic vesicle membrane. It catalyses the reaction RNA(n) + a ribonucleoside 5'-triphosphate = RNA(n+1) + diphosphate. It carries out the reaction ATP + H2O = ADP + phosphate + H(+). The enzyme catalyses Selective cleavage of Gln-|-Gly bond in the poliovirus polyprotein. In other picornavirus reactions Glu may be substituted for Gln, and Ser or Thr for Gly.. Forms a complex with host RAN and probably binds to exportins carrying activated MAPK in order to mediate the hyperphosphorylation of host Phe/Gly containing nuclear pore proteins (Nups) resulting in cessation of active nucleocytoplasmic transport. Proteins with NLS signals fail to import, cellular mRNAs fail to export, and some proteins small enough for diffusion are not retained anymore (efflux). The resulting inhibition of cellular protein synthesis serves to ensure maximal viral gene expression and to evade host immune response. The leader protein also inhibits host interferon regulatory factor 3 (IRF3) dimerization, thereby blocking the transcriptional activation of IFN genes. Binds to host RNase L thereby preventing its activation by 2'-5' oligoadenylates in order to counteract the antiviral interferon-inducible OAS/RNase L pathway. Its function is as follows. Forms an icosahedral capsid of pseudo T=3 symmetry with capsid proteins VP2 and VP3. Together they form an icosahedral capsid composed of 60 copies of each VP1, VP2, and VP3, with a diameter of approximately 300 Angstroms. VP4 lies on the inner surface of the protein shell formed by VP1, VP2 and VP3. All the three latter proteins contain a beta-sheet structure called beta-barrel jelly roll. VP1 is situated at the 12 fivefold axes, whereas VP2 and VP3 are located at the quasi-sixfold axes. In terms of biological role, lies on the inner surface of the capsid shell. After binding to the host receptor, the capsid undergoes conformational changes. Capsid protein VP4 is released, capsid protein VP1 N-terminus is externalized, and together, they shape a pore in the host membrane through which the viral genome is translocated into the host cell cytoplasm. After genome has been released, the channel shrinks. Functionally, VP0 precursor is a component of immature procapsids. Involved in host translation shutoff by inhibiting cap-dependent mRNA translation. Nuclear localization is required for this function. The resulting inhibition of cellular protein synthesis serves to ensure maximal viral gene expression and to evade host immune response. Inhibits the phosphorylation of the leader protein. Its function is as follows. Affects membrane integrity and causes an increase in membrane permeability. In terms of biological role, associates with and induces structural rearrangements of intracellular membranes. It displays RNA-binding, nucleotide binding and NTPase activities. Functionally, serves as membrane anchor via its hydrophobic domain. Forms a primer, VPg-pU, which is utilized by the polymerase for the initiation of RNA chains. Its function is as follows. Cysteine protease that generates mature viral proteins from the precursor polyprotein. In addition to its proteolytic activity, it binds to viral RNA, and thus influences viral genome replication. RNA and substrate cooperatively bind to the protease. Cleaves host PABP1, this cleavage is important for viral replication. In terms of biological role, replicates the genomic and antigenomic RNAs by recognizing replications specific signals. Performs VPg uridylylation. The chain is Genome polyprotein from Theiler's murine encephalomyelitis virus (strain DA) (TMEV).